The primary structure comprises 187 residues: Peptide deformylase (187 aa).

The Fe cation site is built by C94 and H136. E137 is an active-site residue. H140 contributes to the Fe cation binding site.

It belongs to the polypeptide deformylase family. Requires Fe(2+) as cofactor.

It carries out the reaction N-terminal N-formyl-L-methionyl-[peptide] + H2O = N-terminal L-methionyl-[peptide] + formate. Removes the formyl group from the N-terminal Met of newly synthesized proteins. Requires at least a dipeptide for an efficient rate of reaction. N-terminal L-methionine is a prerequisite for activity but the enzyme has broad specificity at other positions. This is Peptide deformylase from Chlorobaculum tepidum (strain ATCC 49652 / DSM 12025 / NBRC 103806 / TLS) (Chlorobium tepidum).